The primary structure comprises 92 residues: DNA-binding protein HU-alpha (92 aa).

It belongs to the bacterial histone-like protein family. Heterodimer of an alpha and a beta chain.

Its function is as follows. Histone-like DNA-binding protein which is capable of wrapping DNA to stabilize it, and thus to prevent its denaturation under extreme environmental conditions. This chain is DNA-binding protein HU-alpha (hupA), found in Burkholderia pseudomallei (strain K96243).